A 77-amino-acid chain; its full sequence is Exodeoxyribonuclease 7 small subunit (77 aa).

This sequence belongs to the XseB family. Heterooligomer composed of large and small subunits.

The protein localises to the cytoplasm. The enzyme catalyses Exonucleolytic cleavage in either 5'- to 3'- or 3'- to 5'-direction to yield nucleoside 5'-phosphates.. Functionally, bidirectionally degrades single-stranded DNA into large acid-insoluble oligonucleotides, which are then degraded further into small acid-soluble oligonucleotides. This is Exodeoxyribonuclease 7 small subunit from Trichlorobacter lovleyi (strain ATCC BAA-1151 / DSM 17278 / SZ) (Geobacter lovleyi).